Here is a 238-residue protein sequence, read N- to C-terminus: Probable transcriptional regulatory protein CF0838 (238 aa).

Belongs to the TACO1 family.

Its subcellular location is the cytoplasm. The sequence is that of Probable transcriptional regulatory protein CF0838 from Chlamydia felis (strain Fe/C-56) (Chlamydophila felis).